The chain runs to 957 residues: Glycine dehydrogenase (decarboxylating) (957 aa).

N6-(pyridoxal phosphate)lysine is present on K708.

This sequence belongs to the GcvP family. The glycine cleavage system is composed of four proteins: P, T, L and H. The cofactor is pyridoxal 5'-phosphate.

It catalyses the reaction N(6)-[(R)-lipoyl]-L-lysyl-[glycine-cleavage complex H protein] + glycine + H(+) = N(6)-[(R)-S(8)-aminomethyldihydrolipoyl]-L-lysyl-[glycine-cleavage complex H protein] + CO2. The glycine cleavage system catalyzes the degradation of glycine. The P protein binds the alpha-amino group of glycine through its pyridoxal phosphate cofactor; CO(2) is released and the remaining methylamine moiety is then transferred to the lipoamide cofactor of the H protein. The sequence is that of Glycine dehydrogenase (decarboxylating) from Escherichia coli O7:K1 (strain IAI39 / ExPEC).